The chain runs to 360 residues: ACT1-like protein (360 aa).

The interval 339-360 (KKQSHNNANDHHEDSMNYSITQ) is disordered.

As to quaternary structure, interacts with the receptor complex composed of ilcr-1 and ilcr-2. Also interacts with pik-1. In terms of tissue distribution, expressed in neurons.

Its function is as follows. May act as an adapter to facilitate downstream signaling for the receptor complex composed of ilcr-1 and ilcr-2, which is a signaling complex that modulates neuronal activity and animal behavior in response to sensory neuron input. This is ACT1-like protein from Caenorhabditis elegans.